The chain runs to 201 residues: MRLNIVVVGVGGQGALTTSGIIARAAMRAGLNVVTAETHGMAQRGGSVEVHVRIGDVRAPLIPEGGADVMIALEPAEALRYAKFLNKNTLVILNTRKIIPPSVTAGTAKYPELDEIIGELRKVTPRVIPVNASEIAEKAGSVLATNVVVVGMLFGYYSMPFGIEHVEEAIRETMKSKIVDLNLKALKMGYNQAISGRPSAV.

As to quaternary structure, heterodimer of the IorA and IorB subunits.

It carries out the reaction indole-3-pyruvate + 2 oxidized [2Fe-2S]-[ferredoxin] + CoA = (indol-3-yl)acetyl-CoA + 2 reduced [2Fe-2S]-[ferredoxin] + CO2 + H(+). In terms of biological role, catalyzes the ferredoxin-dependent oxidative decarboxylation of arylpyruvates. In Archaeoglobus fulgidus (strain ATCC 49558 / DSM 4304 / JCM 9628 / NBRC 100126 / VC-16), this protein is Indolepyruvate oxidoreductase subunit IorB (iorB).